The sequence spans 349 residues: MSKSKDDAPHELESQFILRLPPEYASTVRRAVQSGHVNLKDRLSIELHPDGRHGIVRVDRVPLAAKLVDLPRVMESLKTIDKKTFYKTADVCQMLVSTVDGDLYPPVEEPVATADPKASKKKDKDKEKKFVWNHGITLPLKNVRKRRFRKTAKKKYIESPDVEKEVKRLLSTDAEAVSTRWEIIAEDETKETENQGLDISSPGMSGHRQGHDSLEHDELREIFNDLSSSSEDEDETQHQDEEDINIIDTEEDLERQLQDKLNESDEQHQENEGTNQLVMGIQKQIDNMKGKLQETQDRAKRQEDLIMKVENLALKNRFQAVLDELKQKEDREKEQLSSLQEELESLLEK.

Residues 107 to 126 (VEEPVATADPKASKKKDKDK) are disordered. A phosphoserine mark is found at serine 171, serine 200, serine 201, and serine 213. The tract at residues 185 to 212 (AEDETKETENQGLDISSPGMSGHRQGHD) is disordered. The tract at residues 227–247 (SSSSEDEDETQHQDEEDINII) is disordered. Positions 230 to 247 (SEDEDETQHQDEEDINII) are enriched in acidic residues. A coiled-coil region spans residues 244–349 (INIIDTEEDL…QEELESLLEK (106 aa)). Residue serine 264 is modified to Phosphoserine.

Belongs to the TAF7 family. In terms of assembly, component of the TFIID basal transcription factor complex, composed of TATA-box-binding protein TBP, and a number of TBP-associated factors (TAFs), including TAF1, TAF2, TAF3, TAF4, TAF5, TAF6, TAF7, TAF8, TAF9, TAF10, TAF11, TAF12 and TAF13. Part of a TFIID-containing RNA polymerase II pre-initiation complex that is composed of TBP and at least GTF2A1, GTF2A2, GTF2E1, GTF2E2, GTF2F1, GTF2H2, GTF2H3, GTF2H4, GTF2H5, GTF2B, TCEA1, ERCC2, ERCC3, TAF1, TAF2, TAF3, TAF4, TAF5, TAF6, TAF7, TAF8, TAF9, TAF10, TAF11, TAF12 and TAF13. Interacts with TAF1; the interaction is direct. Interacts with TAF1, TAF5, TAF11, TAF12, and TAF13, but not with TAF10 or TBP. Component of some MLL1/MLL complex, at least composed of the core components KMT2A/MLL1, ASH2L, HCFC1/HCF1, WDR5 and RBBP5, as well as the facultative components BACC1, CHD8, E2F6, HSP70, INO80C, KANSL1, LAS1L, MAX, MCRS1, MGA, MYST1/MOF, PELP1, PHF20, PRP31, RING2, RUVB1/TIP49A, RUVB2/TIP49B, SENP3, TAF1, TAF4, TAF6, TAF7, TAF9 and TEX10. Interacts with CIITA and TAF1 and inhibits their acetyltransferase activity, and behaving as a repressor of CIITA- and TAF1-regulated promoters. Phosphorylated by CIITA. Phosphorylation at Ser-264 by TAF1 in early G1 phase disrupts binding to TAF1. In terms of processing, ubiquitinated by TRIM26; leading to proteasomal degradation.

Its subcellular location is the nucleus. In terms of biological role, the TFIID basal transcription factor complex plays a major role in the initiation of RNA polymerase II (Pol II)-dependent transcription. TFIID recognizes and binds promoters with or without a TATA box via its subunit TBP, a TATA-box-binding protein, and promotes assembly of the pre-initiation complex (PIC). The TFIID complex consists of TBP and TBP-associated factors (TAFs), including TAF1, TAF2, TAF3, TAF4, TAF5, TAF6, TAF7, TAF8, TAF9, TAF10, TAF11, TAF12 and TAF13. TAF7 forms a promoter DNA binding subcomplex of TFIID, together with TAF1 and TAF2. Part of a TFIID complex containing TAF10 (TFIID alpha) and a TFIID complex lacking TAF10 (TFIID beta). This Bos taurus (Bovine) protein is Transcription initiation factor TFIID subunit 7 (TAF7).